The chain runs to 201 residues: Small ribosomal subunit protein uS4c (201 aa).

The 61-residue stretch at 89 to 149 folds into the S4 RNA-binding domain; it reads MRLDNILFRL…DEQKSRALIQ (61 aa).

This sequence belongs to the universal ribosomal protein uS4 family. As to quaternary structure, part of the 30S ribosomal subunit. Contacts protein S5. The interaction surface between S4 and S5 is involved in control of translational fidelity.

The protein localises to the plastid. Its subcellular location is the chloroplast. Functionally, one of the primary rRNA binding proteins, it binds directly to 16S rRNA where it nucleates assembly of the body of the 30S subunit. Its function is as follows. With S5 and S12 plays an important role in translational accuracy. The chain is Small ribosomal subunit protein uS4c (rps4) from Coffea arabica (Arabian coffee).